The chain runs to 142 residues: Putative pre-16S rRNA nuclease (142 aa).

The protein belongs to the YqgF nuclease family.

Its subcellular location is the cytoplasm. Its function is as follows. Could be a nuclease involved in processing of the 5'-end of pre-16S rRNA. The chain is Putative pre-16S rRNA nuclease from Desulfitobacterium hafniense (strain DSM 10664 / DCB-2).